We begin with the raw amino-acid sequence, 193 residues long: Dual-action ribosomal maturation protein DarP (193 aa).

A compositionally biased stretch (basic and acidic residues) spans 1 to 10; the sequence is MRGRDEDTGE. Disordered regions lie at residues 1 to 20 and 170 to 193; these read MRGR…SQQR and SQKP…ENDE. A compositionally biased stretch (acidic residues) spans 181-193; it reads GLEDEESASENDE.

This sequence belongs to the DarP family.

It localises to the cytoplasm. Member of a network of 50S ribosomal subunit biogenesis factors which assembles along the 30S-50S interface, preventing incorrect 23S rRNA structures from forming. Promotes peptidyl transferase center (PTC) maturation. The chain is Dual-action ribosomal maturation protein DarP from Xanthomonas campestris pv. campestris (strain 8004).